Consider the following 266-residue polypeptide: Glucosamine-6-phosphate deaminase (266 aa).

D72 (proton acceptor; for enolization step) is an active-site residue. D141 serves as the catalytic For ring-opening step. The active-site Proton acceptor; for ring-opening step is the H143. E148 (for ring-opening step) is an active-site residue.

Belongs to the glucosamine/galactosamine-6-phosphate isomerase family. NagB subfamily. In terms of assembly, homohexamer.

The enzyme catalyses alpha-D-glucosamine 6-phosphate + H2O = beta-D-fructose 6-phosphate + NH4(+). Its pathway is amino-sugar metabolism; N-acetylneuraminate degradation; D-fructose 6-phosphate from N-acetylneuraminate: step 5/5. Allosterically activated by N-acetylglucosamine 6-phosphate (GlcNAc6P). Functionally, catalyzes the reversible isomerization-deamination of glucosamine 6-phosphate (GlcN6P) to form fructose 6-phosphate (Fru6P) and ammonium ion. The chain is Glucosamine-6-phosphate deaminase from Tolumonas auensis (strain DSM 9187 / NBRC 110442 / TA 4).